The sequence spans 43 residues: Hemolysin H1U (43 aa).

Residue methionine 1 is modified to N-formylmethionine.

This sequence belongs to the staphylococcal hemolytic protein family.

It localises to the secreted. In terms of biological role, virulence factor. Causes hemolysis of erythrocytes. Acts synergistically with beta-hemolysins from S.aureus ATCC 25923. Cytotoxic towards human dermal fibroblasts. This chain is Hemolysin H1U, found in Staphylococcus ureilyticus (Staphylococcus cohnii subsp. urealyticus).